An 800-amino-acid chain; its full sequence is Putative antiporter subunit mnhA2 (800 aa).

21 helical membrane passes run 1–21, 29–49, 78–98, 109–129, 133–153, 167–187, 209–229, 241–261, 272–292, 300–320, 336–356, 387–407, 424–444, 472–492, 528–548, 595–615, 627–647, 651–671, 676–696, 712–732, and 768–788; these read MSLV…LFTL, VAGY…IMKI, GLSL…FFYA, LPRF…IVIA, ILMY…ISYW, FMIT…LYII, FIPM…QFPF, TPVS…FLLF, VYIY…SLTA, GILA…VGLG, ILVL…KCAL, IVML…GFLS, YGFV…ILTF, PWLF…IFFV, VNLP…LALV, IMIT…TVGF, GPLE…LIFI, LTMV…FIAM, LALT…VSFS, TFKI…IFVA, and LDTM…YTLL.

This sequence belongs to the CPA3 antiporters (TC 2.A.63) subunit A family. May form a heterooligomeric complex that consists of seven subunits: mnhA2, mnhB2, mnhC2, mnhD2, mnhE2, mnhF2 and mnhG2.

The protein resides in the cell membrane. The polypeptide is Putative antiporter subunit mnhA2 (mnhA2) (Staphylococcus epidermidis (strain ATCC 12228 / FDA PCI 1200)).